The following is a 1193-amino-acid chain: Chloride channel protein 2 (1193 aa).

At 1–168 (MVYFGDRQRD…WIWRHTVARL (168 aa)) the chain is on the cytoplasmic side. Positions 76-97 (SHAFYPCPPPAENARDSDSSDD) are disordered. 2 consecutive transmembrane segments (helical) span residues 169-204 (GEDWVFLALLGIIMALLSFIMDKGISICTNARIWLY) and 213-236 (VQYIAWVSLPVCLILFSAGFVHLI). The short motif at 242–246 (GSGIP) is the Selectivity filter part_1 element. Ser-243 is a binding site for chloride. Residues 245–252 (IPEMKTIL) constitute an intramembrane region (helical). The next 2 helical transmembrane spans lie at 261–279 (LTFKTLVAKVIGLTATLGS) and 286–304 (EGPFVHIASIVAQLLSKLV). Residues 284–288 (GKEGP) carry the Selectivity filter part_2 motif. 2 intramembrane regions (helical) span residues 320–332 (MLAAACAVGVGAC) and 336–344 (PVGGVLFSI). 5 helical membrane passes run 356-373 (YWRGFFAAVCGATVFRLL), 402-430 (LFVFALIGLVCGLGGASYVWVHRRYVLFM), 439-458 (FLQKNRFLYPGFLALLVSSI), 511-530 (FGNLVIYTLFTFVVSIIAST), and 536-555 (GMFIPVFKIGAGFGRLVGEF). The Selectivity filter part_3 motif lies at 536–540 (GMFIP). Phe-538 serves as a coordination point for chloride. Residues 576–590 (GGYAVVGAAAFSGSV) constitute an intramembrane region (helical). The segment at residues 591-592 (TH) is an intramembrane region (note=Loop between two helices). Positions 593 to 604 (TVSVAVIIFEMT) form an intramembrane region, helical. Positions 605 to 609 (GQITH) form an intramembrane region, note=Loop between two helices. A helical membrane pass occupies residues 610–626 (VVPVMIAVLVANAVAAL). At 627–1193 (LQPSIYDSII…KSNTENGNHA (567 aa)) the chain is on the cytoplasmic side. Tyr-632 contributes to the chloride binding site. The 61-residue stretch at 663 to 723 (MVRDVKYIWH…KMIEKHIGRE (61 aa)) folds into the CBS 1 domain. Disordered stretches follow at residues 848–884 (TLQDVQPDPETGSLSPAASNHEVEVPRTPSTPGVSKK), 1103–1122 (NSFVPPTRDEDADEKPAVEK), and 1159–1193 (IKHTDKGTVSLTMPPQESKQSPSADKSNTENGNHA). Positions 1048-1105 (IDPSPFQLVERTSILKVHSLFSMVGINHAYVTKIGRLVGVVGLKELRKAIEDINSNSF) constitute a CBS 2 domain. Over residues 1165–1193 (GTVSLTMPPQESKQSPSADKSNTENGNHA) the composition is skewed to polar residues.

Belongs to the chloride channel (TC 2.A.49) family. In terms of tissue distribution, at embryonic stages 13-16, expressed in a subset of the midline cells of the midline primordium and in all of the midline glia. Expressed along the Z-line of the sarcomere in larval longitudinal muscles.

The protein resides in the membrane. Functionally, voltage-gated chloride channel. Chloride channels have several functions including the regulation of cell volume; membrane potential stabilization, signal transduction and transepithelial transport. The polypeptide is Chloride channel protein 2 (ClC-a) (Drosophila melanogaster (Fruit fly)).